Reading from the N-terminus, the 192-residue chain is Glycerol-3-phosphate acyltransferase (192 aa).

5 helical membrane-spanning segments follow: residues 3–23 (ALFLVIFAYLLGSITFGEVIA), 51–71 (YGVLVFFLDFLKGFIPALIAV), 80–100 (VLTFTGLASVLGHMYPVFFGF), 112–132 (VVFAVSPSVALFSFLVWLGIF), and 149–169 (AFLFLFVAGYPVNVLFMAIVI).

This sequence belongs to the PlsY family. Probably interacts with PlsX.

The protein resides in the cell inner membrane. It catalyses the reaction an acyl phosphate + sn-glycerol 3-phosphate = a 1-acyl-sn-glycero-3-phosphate + phosphate. Its pathway is lipid metabolism; phospholipid metabolism. Its function is as follows. Catalyzes the transfer of an acyl group from acyl-phosphate (acyl-PO(4)) to glycerol-3-phosphate (G3P) to form lysophosphatidic acid (LPA). This enzyme utilizes acyl-phosphate as fatty acyl donor, but not acyl-CoA or acyl-ACP. The sequence is that of Glycerol-3-phosphate acyltransferase from Aquifex aeolicus (strain VF5).